The following is a 36-amino-acid chain: Pancreatic polypeptide (36 aa).

At tyrosine 36 the chain carries Tyrosine amide.

Belongs to the NPY family.

Its subcellular location is the secreted. Its function is as follows. Hormone secreted by pancreatic cells that acts as a regulator of pancreatic and gastrointestinal functions probably by signaling through the G protein-coupled receptor NPY4R2. The polypeptide is Pancreatic polypeptide (PPY) (Erinaceus europaeus (Western European hedgehog)).